Consider the following 483-residue polypeptide: Regulatory protein ViaA (483 aa).

Belongs to the ViaA family. In terms of assembly, homodimer. Interacts with RavA.

The protein resides in the cytoplasm. Its function is as follows. Component of the RavA-ViaA chaperone complex, which may act on the membrane to optimize the function of some of the respiratory chains. ViaA stimulates the ATPase activity of RavA. In Escherichia coli O139:H28 (strain E24377A / ETEC), this protein is Regulatory protein ViaA.